Here is a 960-residue protein sequence, read N- to C-terminus: Pentatricopeptide repeat-containing protein At3g63370, chloroplastic (960 aa).

A chloroplast-targeting transit peptide spans 1-64 (MEYAVTNMRL…PKLACFDGVL (64 aa)). PPR repeat units follow at residues 79 to 109 (PVEAFAYVLELCGKRRAVSQGRQLHSRIFKT), 115 to 145 (LDFLAGKLVFMYGKCGSLDDAEKVFDEMPDR), 146 to 180 (TAFAWNTMIGAYVSNGEPASALALYWNMRVEGVPL), 181 to 215 (GLSSFPALLKACAKLRDIRSGSELHSLLVKLGYHS), 216 to 246 (TGFIVNALVSMYAKNDDLSAARRLFDGFQEK), 248 to 282 (DAVLWNSILSSYSTSGKSLETLELFREMHMTGPAP), 283 to 317 (NSYTIVSALTACDGFSYAKLGKEIHASVLKSSTHS), 319 to 349 (ELYVCNALIAMYTRCGKMPQAERILRQMNNA), 350 to 384 (DVVTWNSLIKGYVQNLMYKEALEFFSDMIAAGHKS), 385 to 419 (DEVSMTSIIAASGRLSNLLAGMELHAYVIKHGWDS), 420 to 450 (NLQVGNTLIDMYSKCNLTCYMGRAFLRMHDK), 451 to 485 (DLISWTTVIAGYAQNDCHVEALELFRDVAKKRMEI), 486 to 516 (DEMILGSILRASSVLKSMLIVKEIHCHILRK), 520 to 550 (DTVIQNELVDVYGKCRNMGYATRVFESIKGK), 551 to 585 (DVVSWTSMISSSALNGNESEAVELFRRMVETGLSA), 586 to 620 (DSVALLCILSAAASLSALNKGREIHCYLLRKGFCL), 621 to 651 (EGSIAVAVVDMYACCGDLQSAKAVFDRIERK), 652 to 686 (GLLQYTSMINAYGMHGCGKAAVELFDKMRHENVSP), 687 to 717 (DHISFLALLYACSHAGLLDEGRGFLKIMEHE), and 723 to 753 (WPEHYVCLVDMLGRANCVVEAFEFVKMMKTE). Residues 758 to 833 (VWCALLAACR…HPGCSWIEMD (76 aa)) are type E motif. The interval 834–864 (GKVHKFTARDKSHPESKEIYEKLSEVTRKLE) is type E(+) motif. Positions 865-960 (REVGYVADTK…SGLCSCGDSW (96 aa)) are type DYW motif.

This sequence belongs to the PPR family. PCMP-H subfamily.

It localises to the plastid. Its subcellular location is the chloroplast. Involved in RNA editing event in chloroplasts. Required for the editing of a single site in rps14 transcript. The polypeptide is Pentatricopeptide repeat-containing protein At3g63370, chloroplastic (PCMP-H83) (Arabidopsis thaliana (Mouse-ear cress)).